The following is a 103-amino-acid chain: UPF0145 protein Rsph17025_2361 (103 aa).

Belongs to the UPF0145 family.

The chain is UPF0145 protein Rsph17025_2361 from Cereibacter sphaeroides (strain ATCC 17025 / ATH 2.4.3) (Rhodobacter sphaeroides).